Here is a 724-residue protein sequence, read N- to C-terminus: Cyclin-T1 (724 aa).

Phosphoserine is present on S117. A Nuclear localization signal motif is present at residues 253 to 270; sequence KRIRNWRAYQAAMKTKPD. K342 participates in a covalent cross-link: Glycyl lysine isopeptide (Lys-Gly) (interchain with G-Cter in SUMO2). A coiled-coil region spans residues 384 to 425; it reads SAKVSLKEYRAKHAEELAAQKRQLENMEANVKSQYAYAAQNL. Phosphoserine is present on S388. At K390 the chain carries N6-acetyllysine. Residue K415 forms a Glycyl lysine isopeptide (Lys-Gly) (interchain with G-Cter in SUMO2) linkage. Residues S416, S473, and S474 each carry the ADP-ribosylserine modification. The tract at residues 479 to 549 is histidine-rich domain (HRD); sequence IKMRIKVHSA…RPSDPKHSSQ (71 aa). Residue K480 forms a Glycyl lysine isopeptide (Lys-Gly) (interchain with G-Cter in SUMO2) linkage. Over residues 483–507 the composition is skewed to basic and acidic residues; sequence IKVHSAGDKHNSIEDSVTKSREHKE. Disordered stretches follow at residues 483–586 and 691–724; these read IKVH…VFDH and PRAG…PLPK. K484 carries the N6-(ADP-ribosyl)lysine modification. ADP-ribosylhistidine is present on H486. Residues S494 and S498 each carry the phosphoserine modification. A compositionally biased stretch (basic residues) spans 508–529; sequence KQRTHPSNHHHHHNHHSHRHSH. At H529 the chain carries ADP-ribosylhistidine. Residues S548 and S551 each carry the ADP-ribosylserine modification. At H555 the chain carries ADP-ribosylhistidine. Over residues 559-569 the composition is skewed to low complexity; sequence SLSSTLSSSSS. S562 bears the ADP-ribosylserine mark. The segment covering 708–724 has biased composition (pro residues); that stretch reads PPPLPSEPPPPLPPLPK.

Belongs to the cyclin family. Cyclin C subfamily. In terms of assembly, cyclin-T1 is the predominant cyclin that associates with CDK9 to form a heterodimer called P-TEFb. P-TEFb forms a complex with AFF4/AF5Q31. Component of a complex which is at least composed of HTATSF1/Tat-SF1, P-TEFb complex, RNA pol II, SUPT5H, and NCL/nucleolin. Component of the 7SK snRNP complex at least composed of P-TEFb (composed of CDK9 and CCNT1/cyclin-T1), HEXIM1, HEXIM2, BCDIN3, SART3 proteins and 7SK and U6 snRNAs. Interacts (via central region) with ZMYND8 (via N-terminus); the interaction is direct and the association appears to occur between homodimeric ZMYND8 and the activated form of the P-TEFb complex. Interacts with BRD4, targets chromatin binding. Interacts with JMJD6. Interacts with MDFIC. Interacts with HSF1. Interacts with HTATSF1. Interacts with TBX21. Post-translationally, ADP-ribosylation on serine residues by PARP1 in response to DNA damage disrupts the phase separation activity of CCNT1, thereby preventing activation of CDK9.

The protein localises to the nucleus. In terms of biological role, regulatory subunit of the cyclin-dependent kinase pair (CDK9/cyclin-T1) complex, also called positive transcription elongation factor B (P-TEFb), which facilitates the transition from abortive to productive elongation by phosphorylating the CTD (C-terminal domain) of the large subunit of RNA polymerase II (RNA Pol II). Required to activate the protein kinase activity of CDK9: acts by mediating formation of liquid-liquid phase separation (LLPS) that enhances binding of P-TEFb to the CTD of RNA Pol II. This is Cyclin-T1 (Ccnt1) from Mus musculus (Mouse).